A 277-amino-acid polypeptide reads, in one-letter code: Ribosomal RNA small subunit methyltransferase I (277 aa).

The protein belongs to the methyltransferase superfamily. RsmI family.

The protein localises to the cytoplasm. It catalyses the reaction cytidine(1402) in 16S rRNA + S-adenosyl-L-methionine = 2'-O-methylcytidine(1402) in 16S rRNA + S-adenosyl-L-homocysteine + H(+). In terms of biological role, catalyzes the 2'-O-methylation of the ribose of cytidine 1402 (C1402) in 16S rRNA. This chain is Ribosomal RNA small subunit methyltransferase I, found in Mycoplasma genitalium (strain ATCC 33530 / DSM 19775 / NCTC 10195 / G37) (Mycoplasmoides genitalium).